The primary structure comprises 45 residues: Defensin Tk-AMP-D4 (45 aa).

4 disulfides stabilise this stretch: Cys3–Cys45, Cys14–Cys34, Cys20–Cys39, and Cys24–Cys41.

Plant defense peptide. The polypeptide is Defensin Tk-AMP-D4 (Triticum kiharae (Wheat)).